The sequence spans 343 residues: CRISPR-associated endonuclease Cas1 1 (343 aa).

Positions 166, 234, and 249 each coordinate Mn(2+).

This sequence belongs to the CRISPR-associated endonuclease Cas1 family. As to quaternary structure, homodimer, forms a heterotetramer with a Cas2 homodimer. Requires Mg(2+) as cofactor. It depends on Mn(2+) as a cofactor.

CRISPR (clustered regularly interspaced short palindromic repeat), is an adaptive immune system that provides protection against mobile genetic elements (viruses, transposable elements and conjugative plasmids). CRISPR clusters contain spacers, sequences complementary to antecedent mobile elements, and target invading nucleic acids. CRISPR clusters are transcribed and processed into CRISPR RNA (crRNA). Acts as a dsDNA endonuclease. Involved in the integration of spacer DNA into the CRISPR cassette. This Moorella thermoacetica (strain ATCC 39073 / JCM 9320) protein is CRISPR-associated endonuclease Cas1 1.